The primary structure comprises 103 residues: Host transcription reprogramming factor 6 (103 aa).

The signal sequence occupies residues 1–19 (MRATTAFQVIAFLAVGAAA). The C2H2-type zinc-finger motif lies at 66–92 (YWCPNQVCAKTFATQEERDHHIANTVH). The interval 82–103 (ERDHHIANTVHPTNSKRDVLLQ) is disordered.

Its subcellular location is the secreted. It is found in the host nucleus. Probable secreted effector that translocates into the nuclei of host cells to reprogram the expression of targeted genes by binding on effector binding elements in rice. This Pyricularia oryzae (strain 70-15 / ATCC MYA-4617 / FGSC 8958) (Rice blast fungus) protein is Host transcription reprogramming factor 6.